The sequence spans 31 residues: Cyclotide psybry C (31 aa).

The segment at residues 1–31 is a cross-link (cyclopeptide (Gly-Asn)); that stretch reads GFNPCGETCQIDQTCHAPGCTCSIANICVRN. Intrachain disulfides connect Cys5-Cys20, Cys9-Cys22, and Cys15-Cys28.

Post-translationally, this is a cyclic peptide.

In terms of biological role, probably participates in a plant defense mechanism. This is Cyclotide psybry C from Psychotria brachyceras.